Consider the following 340-residue polypeptide: NADPH dehydrogenase (340 aa).

Residue 23–26 (SPMC) coordinates FMN. A substrate-binding site is contributed by tyrosine 28. Positions 60 and 102 each coordinate FMN. Residue 164 to 167 (HAAH) participates in substrate binding. Residues arginine 215 and 307-308 (GR) contribute to the FMN site.

The protein belongs to the NADH:flavin oxidoreductase/NADH oxidase family. NamA subfamily. As to quaternary structure, homotetramer. FMN serves as cofactor.

The enzyme catalyses A + NADPH + H(+) = AH2 + NADP(+). In terms of biological role, catalyzes the reduction of the double bond of an array of alpha,beta-unsaturated aldehydes and ketones. It also reduces the nitro group of nitroester and nitroaromatic compounds. It could have a role in detoxification processes. This Geobacillus thermodenitrificans (strain NG80-2) protein is NADPH dehydrogenase.